The primary structure comprises 328 residues: D-cysteine desulfhydrase (328 aa).

Lys-51 carries the post-translational modification N6-(pyridoxal phosphate)lysine.

This sequence belongs to the ACC deaminase/D-cysteine desulfhydrase family. In terms of assembly, homodimer. Pyridoxal 5'-phosphate is required as a cofactor.

The enzyme catalyses D-cysteine + H2O = hydrogen sulfide + pyruvate + NH4(+) + H(+). Its function is as follows. Catalyzes the alpha,beta-elimination reaction of D-cysteine and of several D-cysteine derivatives. It could be a defense mechanism against D-cysteine. This chain is D-cysteine desulfhydrase, found in Salmonella schwarzengrund (strain CVM19633).